Consider the following 882-residue polypeptide: MQNEKTQSKKPSPVPAEHSPMMAQYFGLKADYPDTLLFYRMGDFYELFFADAEKAARLLNITLTQRGQSAGQPVVMAGVPFHSVDTYLARLIKLGESVAICEQVGEVTGKGPVERKVVRVVTPGTLTDLELLSDKSESMLLAVHQGPRNTCGLAWLSVTQGEVHLAECAVDDLAQWVLRIAPGEIIFSAGTTPTFEARLRGAPLAGAVSVSVRPDWQFDAGLGEKKLLAQLQAASLAPWQAQDLPQAHAAAAALLGYAEHTQGQALTHIQSVRVQRSDELIDLPPTTRRNLELTQTLRGEDQPTLFSLLDTCMTGMGSRLLKNWLLEPRRDRGEAQQRLNAIAALQSGDAHTSRAGVWRQLREQLKGSTDVERITARIALRQVRPRELVALQLTLQKTELLTHTTRGLEVYLTQISGHLLAPEACADLLARAIDPEPAVLVRDGGVIASGFDAELDELRAIQTNCDGFLLDLEVREKARTGIANLRVQFNKVHGFFIEVTQGQVDKVPDDYRRRQTLKNAERFITPELKAFEDKALSAQERALAREKWLYEQVLDQLQVFVPALTRVARALATLDALCALTERSLTLDWCAPQFVKEPCLDITQGRHPVVQARLAETSSGAFIANDTRMGPKQRMQIITGPNMGGKSTYMRQIAVIVLLASMGSYVPASACRLGPIDAIHTRIGAADDLANAQSTFMLEMLEAAQILIAATPNSLVLMDEIGRGTSTFDGLALASSIATQLHDKTQAYTLFATHYFELTEFPAQHHAAINVHVSAAEAGRDIVFLHEIQPGPASKSYGIQVARLAGMPAAVLNQARQTLAALESQATQNQAQVDLFAAPPATETAADSAIETAVAALNPDNLSPREALEALYQLKKLASGKA.

Residue 640–647 coordinates ATP; that stretch reads GPNMGGKS.

This sequence belongs to the DNA mismatch repair MutS family.

Its function is as follows. This protein is involved in the repair of mismatches in DNA. It is possible that it carries out the mismatch recognition step. This protein has a weak ATPase activity. The chain is DNA mismatch repair protein MutS from Albidiferax ferrireducens (strain ATCC BAA-621 / DSM 15236 / T118) (Rhodoferax ferrireducens).